Here is a 155-residue protein sequence, read N- to C-terminus: Small ribosomal subunit protein uS7cz/uS7cy (155 aa).

This sequence belongs to the universal ribosomal protein uS7 family. In terms of assembly, part of the 30S ribosomal subunit.

The protein localises to the plastid. The protein resides in the chloroplast. In terms of biological role, one of the primary rRNA binding proteins, it binds directly to 16S rRNA where it nucleates assembly of the head domain of the 30S subunit. This Anthoceros angustus (Hornwort) protein is Small ribosomal subunit protein uS7cz/uS7cy (rps7-A).